We begin with the raw amino-acid sequence, 162 residues long: MADSSFDIVSKVERQEVDNALNQAAKEISQRYDFKGVGASISWSGEKILMEANSEDRVTAVLDVFQSKLIKRGISLKALDAGEPQLSGKEYKIFASIEEGISQENAKKVAKLIRDEGPKGVKAQVQGEELRVSSKSRDDLQTVISLLKGQDFDFALQFVNYR.

The protein belongs to the YajQ family.

It is found in the cytoplasm. Its subcellular location is the nucleoid. Nucleotide-binding protein. The chain is Nucleotide-binding protein SCO4614 from Streptomyces coelicolor (strain ATCC BAA-471 / A3(2) / M145).